The sequence spans 395 residues: Probable beta-1,3-galactosyltransferase 8 (395 aa).

A helical; Signal-anchor for type II membrane protein membrane pass occupies residues 5–27 (AASGKAIIVLCLASFLAGSLFMS). An N-linked (GlcNAc...) asparagine glycan is attached at Asn117.

This sequence belongs to the glycosyltransferase 31 family. The cofactor is Mn(2+).

It is found in the golgi apparatus membrane. It participates in protein modification; protein glycosylation. Its function is as follows. Beta-1,3-galactosyltransferase that transfers galactose from UDP-galactose to substrates with a terminal glycosyl residue. This is Probable beta-1,3-galactosyltransferase 8 (B3GALT8) from Arabidopsis thaliana (Mouse-ear cress).